A 486-amino-acid polypeptide reads, in one-letter code: uncharacterized protein (486 aa).

2 ABC transporter domains span residues 2 to 241 (VEFK…KVFV) and 249 to 486 (FEKD…LLFL). 36 to 43 (GKNGEGKS) contacts ATP.

The protein belongs to the ABC transporter superfamily.

This is an uncharacterized protein from Borreliella burgdorferi (strain ATCC 35210 / DSM 4680 / CIP 102532 / B31) (Borrelia burgdorferi).